A 341-amino-acid polypeptide reads, in one-letter code: Anthranilate phosphoribosyltransferase (341 aa).

5-phospho-alpha-D-ribose 1-diphosphate is bound by residues G82, 85–86 (GD), T90, 92–95 (NIST), 110–118 (KHGGRSVSG), and S122. Anthranilate is bound at residue G82. S94 provides a ligand contact to Mg(2+). R168 serves as a coordination point for anthranilate. Mg(2+) contacts are provided by D227 and E228.

This sequence belongs to the anthranilate phosphoribosyltransferase family. In terms of assembly, homodimer. It depends on Mg(2+) as a cofactor.

It carries out the reaction N-(5-phospho-beta-D-ribosyl)anthranilate + diphosphate = 5-phospho-alpha-D-ribose 1-diphosphate + anthranilate. The protein operates within amino-acid biosynthesis; L-tryptophan biosynthesis; L-tryptophan from chorismate: step 2/5. Functionally, catalyzes the transfer of the phosphoribosyl group of 5-phosphorylribose-1-pyrophosphate (PRPP) to anthranilate to yield N-(5'-phosphoribosyl)-anthranilate (PRA). This chain is Anthranilate phosphoribosyltransferase, found in Nitrosomonas europaea (strain ATCC 19718 / CIP 103999 / KCTC 2705 / NBRC 14298).